The sequence spans 49 residues: uncharacterized protein (49 aa).

This is an uncharacterized protein from Treponema pallidum (strain Nichols).